The chain runs to 622 residues: Low affinity potassium transport system protein Kup (622 aa).

12 helical membrane passes run 9 to 29 (LPAI…TSPL), 49 to 69 (VFGF…IKYL), 103 to 123 (VIMG…TPAI), 137 to 157 (PQLD…LFMI), 165 to 185 (VGKL…GLGL), 213 to 233 (VSFI…ALYA), 247 to 267 (WFTV…ALLL), 276 to 296 (PFFL…AALA), 337 to 357 (IYIP…IVSF), 363 to 383 (LAAA…ILST), 396 to 416 (FVAL…TANL), and 419 to 439 (LLSG…VMTT).

This sequence belongs to the HAK/KUP transporter (TC 2.A.72) family.

The protein resides in the cell inner membrane. It carries out the reaction K(+)(in) + H(+)(in) = K(+)(out) + H(+)(out). Its function is as follows. Responsible for the low-affinity transport of potassium into the cell. Likely operates as a K(+):H(+) symporter. This chain is Low affinity potassium transport system protein Kup, found in Shigella boydii serotype 18 (strain CDC 3083-94 / BS512).